We begin with the raw amino-acid sequence, 547 residues long: Putative cysteine ligase BshC (547 aa).

Residues 462 to 484 (NLAEENLDRVIAQARFLRQKVEH) adopt a coiled-coil conformation.

Belongs to the BshC family.

Involved in bacillithiol (BSH) biosynthesis. May catalyze the last step of the pathway, the addition of cysteine to glucosamine malate (GlcN-Mal) to generate BSH. The sequence is that of Putative cysteine ligase BshC from Heliobacterium modesticaldum (strain ATCC 51547 / Ice1).